The following is a 163-amino-acid chain: Crossover junction endodeoxyribonuclease RuvC (163 aa).

Active-site residues include Asp7, Glu66, and Asp139. Mg(2+) is bound by residues Asp7, Glu66, and Asp139.

Belongs to the RuvC family. Homodimer which binds Holliday junction (HJ) DNA. The HJ becomes 2-fold symmetrical on binding to RuvC with unstacked arms; it has a different conformation from HJ DNA in complex with RuvA. In the full resolvosome a probable DNA-RuvA(4)-RuvB(12)-RuvC(2) complex forms which resolves the HJ. It depends on Mg(2+) as a cofactor.

It is found in the cytoplasm. The catalysed reaction is Endonucleolytic cleavage at a junction such as a reciprocal single-stranded crossover between two homologous DNA duplexes (Holliday junction).. Its function is as follows. The RuvA-RuvB-RuvC complex processes Holliday junction (HJ) DNA during genetic recombination and DNA repair. Endonuclease that resolves HJ intermediates. Cleaves cruciform DNA by making single-stranded nicks across the HJ at symmetrical positions within the homologous arms, yielding a 5'-phosphate and a 3'-hydroxyl group; requires a central core of homology in the junction. The consensus cleavage sequence is 5'-(A/T)TT(C/G)-3'. Cleavage occurs on the 3'-side of the TT dinucleotide at the point of strand exchange. HJ branch migration catalyzed by RuvA-RuvB allows RuvC to scan DNA until it finds its consensus sequence, where it cleaves and resolves the cruciform DNA. The protein is Crossover junction endodeoxyribonuclease RuvC of Thermomicrobium roseum (strain ATCC 27502 / DSM 5159 / P-2).